A 155-amino-acid chain; its full sequence is S-ribosylhomocysteine lyase (155 aa).

Fe cation-binding residues include His-57, His-61, and Cys-124.

It belongs to the LuxS family. Homodimer. Fe cation serves as cofactor.

The enzyme catalyses S-(5-deoxy-D-ribos-5-yl)-L-homocysteine = (S)-4,5-dihydroxypentane-2,3-dione + L-homocysteine. In terms of biological role, involved in the synthesis of autoinducer 2 (AI-2) which is secreted by bacteria and is used to communicate both the cell density and the metabolic potential of the environment. The regulation of gene expression in response to changes in cell density is called quorum sensing. Catalyzes the transformation of S-ribosylhomocysteine (RHC) to homocysteine (HC) and 4,5-dihydroxy-2,3-pentadione (DPD). This is S-ribosylhomocysteine lyase from Listeria monocytogenes serovar 1/2a (strain ATCC BAA-679 / EGD-e).